The sequence spans 767 residues: DNA topoisomerase 1 (767 aa).

Residues 1–23 (MSGDHLHNDSQIEADFRLNDSHK) are compositionally biased toward basic and acidic residues. The interval 1–201 (MSGDHLHNDS…NKKKKPKKEE (201 aa)) is disordered. Position 2 is an N-acetylserine (serine 2). Phosphoserine is present on residues serine 2 and serine 10. Positions 24 to 39 (HKDKHKDREHRHKEHK) are enriched in basic residues. The span at 40–110 (KDKEKDREKS…DAKIKKEKEN (71 aa)) shows a compositional bias: basic and acidic residues. A Phosphoserine modification is found at serine 59. Lysine 103 is covalently cross-linked (Glycyl lysine isopeptide (Lys-Gly) (interchain with G-Cter in SUMO2)). Residue lysine 105 forms a Glycyl lysine isopeptide (Lys-Gly) (interchain with G-Cter in SUMO); alternate linkage. Lysine 105 is covalently cross-linked (Glycyl lysine isopeptide (Lys-Gly) (interchain with G-Cter in SUMO2); alternate). Serine 114 carries the phosphoserine modification. A Glycyl lysine isopeptide (Lys-Gly) (interchain with G-Cter in SUMO); alternate cross-link involves residue lysine 119. Residue lysine 119 forms a Glycyl lysine isopeptide (Lys-Gly) (interchain with G-Cter in SUMO2); alternate linkage. Lysine 119 is covalently cross-linked (Glycyl lysine isopeptide (Lys-Gly) (interchain with G-Cter in SUMO1); alternate). Residues 131–168 (PKEDIKPLKRPRDEDDADYKPKKIKTEDIKKEKKRKLE) are compositionally biased toward basic and acidic residues. Glycyl lysine isopeptide (Lys-Gly) (interchain with G-Cter in SUMO2) cross-links involve residues lysine 136 and lysine 150. Residue lysine 155 forms a Glycyl lysine isopeptide (Lys-Gly) (interchain with G-Cter in SUMO); alternate linkage. Residue lysine 155 forms a Glycyl lysine isopeptide (Lys-Gly) (interchain with G-Cter in SUMO2); alternate linkage. Glycyl lysine isopeptide (Lys-Gly) (interchain with G-Cter in SUMO2) cross-links involve residues lysine 160 and lysine 166. Lysine 174 participates in a covalent cross-link: Glycyl lysine isopeptide (Lys-Gly) (interchain with G-Cter in SUMO2); alternate. N6-acetyllysine; alternate is present on lysine 174. Over residues 181-201 (KDKDKKVPEPDNKKKKPKKEE) the composition is skewed to basic and acidic residues. Lysine 206 participates in a covalent cross-link: Glycyl lysine isopeptide (Lys-Gly) (interchain with G-Cter in SUMO2). Lysine 282 bears the N6-acetyllysine mark. Lysine 338 participates in a covalent cross-link: Glycyl lysine isopeptide (Lys-Gly) (interchain with G-Cter in SUMO2). Interaction with DNA regions lie at residues 427-428 (KY) and 490-495 (RAGNEK). The Topo IB-type catalytic domain maps to 434-767 (SSRIKGEKDW…IDMADEDYEF (334 aa)). A Phosphoserine; by CK2 modification is found at serine 508. A Glycyl lysine isopeptide (Lys-Gly) (interchain with G-Cter in SUMO2) cross-link involves residue lysine 551. Residues 587–589 (TAK) form an interaction with DNA region. Glycyl lysine isopeptide (Lys-Gly) (interchain with G-Cter in SUMO2) cross-links involve residues lysine 644, lysine 702, and lysine 714. Residue tyrosine 725 is the O-(3'-phospho-DNA)-tyrosine intermediate of the active site.

The protein belongs to the type IB topoisomerase family. In terms of assembly, monomer. Interacts with ERCC6. Interacts with TPRN; TPRN interacts with a number of DNA damage response proteins, is recruited to sites of DNA damage and may play a role in DNA damage repair. Post-translationally, sumoylated. Lys-119 is the main site of sumoylation. Sumoylation plays a role in partitioning TOP1 between nucleoli and nucleoplasm. Levels are dramatically increased on camptothecin (CPT) treatment. Phosphorylation at Ser-508 by CK2 increases binding to supercoiled DNA and sensitivity to camptothecin.

It localises to the nucleus. The protein resides in the nucleolus. It is found in the nucleoplasm. The enzyme catalyses ATP-independent breakage of single-stranded DNA, followed by passage and rejoining.. Its activity is regulated as follows. Specifically inhibited by camptothecin (CPT), a plant alkaloid with antitumor activity. Releases the supercoiling and torsional tension of DNA introduced during the DNA replication and transcription by transiently cleaving and rejoining one strand of the DNA duplex. Introduces a single-strand break via transesterification at a target site in duplex DNA. The scissile phosphodiester is attacked by the catalytic tyrosine of the enzyme, resulting in the formation of a DNA-(3'-phosphotyrosyl)-enzyme intermediate and the expulsion of a 5'-OH DNA strand. The free DNA strand then rotates around the intact phosphodiester bond on the opposing strand, thus removing DNA supercoils. Finally, in the religation step, the DNA 5'-OH attacks the covalent intermediate to expel the active-site tyrosine and restore the DNA phosphodiester backbone. Regulates the alternative splicing of tissue factor (F3) pre-mRNA in endothelial cells. Involved in the circadian transcription of the core circadian clock component BMAL1 by altering the chromatin structure around the ROR response elements (ROREs) on the BMAL1 promoter. This is DNA topoisomerase 1 (TOP1) from Chlorocebus aethiops (Green monkey).